Here is a 308-residue protein sequence, read N- to C-terminus: Probable lipid phosphate phosphatase 4 (308 aa).

6 helical membrane passes run 26–46, 66–86, 93–113, 162–182, 193–213, and 226–246; these read WLIL…EPFH, IPMW…FIVY, VYDL…TGVT, SFPS…AWYL, GHVA…LIGI, and VFAG…HFFP. A disordered region spans residues 274 to 308; it reads MTRTGSRGMLGNDVEPGNSASSPHDRHRESTDSDF. Residues 296-308 are compositionally biased toward basic and acidic residues; sequence PHDRHRESTDSDF.

It belongs to the PA-phosphatase related phosphoesterase family.

It localises to the membrane. In Arabidopsis thaliana (Mouse-ear cress), this protein is Probable lipid phosphate phosphatase 4 (LPP4).